The chain runs to 370 residues: Mitochondrial carrier protein SCaMC-3L (370 aa).

3 Solcar repeats span residues Glu-90–Tyr-176, Pro-184–Phe-269, and Pro-280–Thr-367. 6 helical membrane passes run Leu-96–Leu-113, Gly-151–Phe-170, Ser-194–Met-207, Tyr-245–Tyr-263, Gly-282–Val-306, and Gly-342–Tyr-361.

Belongs to the mitochondrial carrier (TC 2.A.29) family.

The protein localises to the mitochondrion inner membrane. The catalysed reaction is Mg(2+)(out) + phosphate(in) + ATP(out) = Mg(2+)(in) + phosphate(out) + ATP(in). The enzyme catalyses ADP(out) + phosphate(in) + H(+)(out) = ADP(in) + phosphate(out) + H(+)(in). In terms of biological role, calcium-independent ATP-Mg/Pi exchanger that catalyzes the electroneutral exchange of Mg-ATP or free ADP against an hydrogenphosphate and participates in the net transport of adenine nucleotides across the mitochondria inner membrane. This Homo sapiens (Human) protein is Mitochondrial carrier protein SCaMC-3L.